The chain runs to 212 residues: UPF0319 protein PBPRA2789 (212 aa).

A signal peptide spans 1–21 (MKKILLAFTLPLVLASQTAMA).

It belongs to the UPF0319 family.

The sequence is that of UPF0319 protein PBPRA2789 from Photobacterium profundum (strain SS9).